Consider the following 133-residue polypeptide: IgW chain C region, secreted form 2 (133 aa).

In terms of domain architecture, Ig-like spans 1-71 (VISGFYPDSV…TGSRFNDRIS (71 aa)). Asn32 and Asn112 each carry an N-linked (GlcNAc...) asparagine glycan. A secretory tail region spans residues 76–133 (KGGTVNLPVPGGNTPCTCPPSSCSGCMPKLVYQTDLNVTLENGGQLQYNCHQQACKIK).

Expressed mainly in lymphoid tissues including spleen, epigonal organ and circulating lymphocytes.

Its subcellular location is the secreted. The polypeptide is IgW chain C region, secreted form 2 (Heterodontus francisci (Horn shark)).